A 226-amino-acid polypeptide reads, in one-letter code: 2,3-bisphosphoglycerate-dependent phosphoglycerate mutase (226 aa).

Substrate is bound by residues 8–15 (RHGQSVWN), 21–22 (TG), Arg-58, 109–112 (ERMY), Lys-120, 136–137 (RR), and 180–181 (GN). The active-site Tele-phosphohistidine intermediate is the His-9. Glu-109 acts as the Proton donor/acceptor in catalysis.

Belongs to the phosphoglycerate mutase family. BPG-dependent PGAM subfamily.

It catalyses the reaction (2R)-2-phosphoglycerate = (2R)-3-phosphoglycerate. It functions in the pathway carbohydrate degradation; glycolysis; pyruvate from D-glyceraldehyde 3-phosphate: step 3/5. Functionally, catalyzes the interconversion of 2-phosphoglycerate and 3-phosphoglycerate. This Chlamydia trachomatis serovar L2 (strain ATCC VR-902B / DSM 19102 / 434/Bu) protein is 2,3-bisphosphoglycerate-dependent phosphoglycerate mutase.